We begin with the raw amino-acid sequence, 552 residues long: Cholesterol oxidase (552 aa).

A signal peptide (tat-type signal) is located at residues 1 to 45; sequence MTDSRANRADATRGVASVSRRRFLAGAGLTAGAIALSSMSTSASA. 8 residues coordinate FAD: Y66, G67, E86, G160, N164, G165, M167, and V295. Active-site proton acceptor residues include E406 and H492. FAD is bound by residues G520 and F532.

This sequence belongs to the GMC oxidoreductase family. FAD serves as cofactor. Predicted to be exported by the Tat system. The position of the signal peptide cleavage has been experimentally proven.

Its subcellular location is the secreted. It carries out the reaction cholesterol + O2 = cholest-5-en-3-one + H2O2. The enzyme catalyses cholest-5-en-3-one = cholest-4-en-3-one. It functions in the pathway steroid metabolism; cholesterol degradation. Bifunctional enzyme that catalyzes the oxidation and isomerization of cholesterol to cholestenone (cholest-4-en-3-one), an initial step in the cholesterol degradation process. The protein is Cholesterol oxidase of Brevibacterium sterolicum.